A 96-amino-acid chain; its full sequence is NADH-ubiquinone oxidoreductase chain 4L (96 aa).

Transmembrane regions (helical) follow at residues 1–21, 27–47, and 61–81; these read MELM…ALSL, MLAL…LVMF, and IILL…VVAI.

The protein belongs to the complex I subunit 4L family.

It is found in the mitochondrion membrane. It catalyses the reaction a ubiquinone + NADH + 5 H(+)(in) = a ubiquinol + NAD(+) + 4 H(+)(out). In terms of biological role, core subunit of the mitochondrial membrane respiratory chain NADH dehydrogenase (Complex I) which catalyzes electron transfer from NADH through the respiratory chain, using ubiquinone as an electron acceptor. Part of the enzyme membrane arm which is embedded in the lipid bilayer and involved in proton translocation. The protein is NADH-ubiquinone oxidoreductase chain 4L (MT-ND4L) of Lycodon semicarinatus (Ryukyu odd-tooth snake).